The primary structure comprises 597 residues: Elongation factor 4 (597 aa).

Residues 2–184 (KNIRNFSIIA…TMIAKIPPPV (183 aa)) enclose the tr-type G domain. Residues 14–19 (DHGKST) and 131–134 (NKID) each bind GTP.

It belongs to the TRAFAC class translation factor GTPase superfamily. Classic translation factor GTPase family. LepA subfamily.

Its subcellular location is the cell inner membrane. The catalysed reaction is GTP + H2O = GDP + phosphate + H(+). Its function is as follows. Required for accurate and efficient protein synthesis under certain stress conditions. May act as a fidelity factor of the translation reaction, by catalyzing a one-codon backward translocation of tRNAs on improperly translocated ribosomes. Back-translocation proceeds from a post-translocation (POST) complex to a pre-translocation (PRE) complex, thus giving elongation factor G a second chance to translocate the tRNAs correctly. Binds to ribosomes in a GTP-dependent manner. The sequence is that of Elongation factor 4 from Methylobacillus flagellatus (strain ATCC 51484 / DSM 6875 / VKM B-1610 / KT).